Reading from the N-terminus, the 21-residue chain is QHLADYDEVDDDRAKLHLDAR.

Glutamine 1 is modified (pyrrolidone carboxylic acid). Tyrosine 6 bears the Sulfotyrosine mark.

Heterohexamer; disulfide linked. Contains 2 sets of 3 non-identical chains (alpha, beta and gamma). The 2 heterotrimers are in head to head conformation with the N-termini in a small central domain. Conversion of fibrinogen to fibrin is triggered by thrombin, which cleaves fibrinopeptides A and B from alpha and beta chains, and thus exposes the N-terminal polymerization sites responsible for the formation of the soft clot.

The protein resides in the secreted. Its function is as follows. Cleaved by the protease thrombin to yield monomers which, together with fibrinogen alpha (FGA) and fibrinogen gamma (FGG), polymerize to form an insoluble fibrin matrix. Fibrin has a major function in hemostasis as one of the primary components of blood clots. In addition, functions during the early stages of wound repair to stabilize the lesion and guide cell migration during re-epithelialization. Was originally thought to be essential for platelet aggregation, based on in vitro studies using anticoagulated blood. However subsequent studies have shown that it is not absolutely required for thrombus formation in vivo. Enhances expression of SELP in activated platelets. Maternal fibrinogen is essential for successful pregnancy. Fibrin deposition is also associated with infection, where it protects against IFNG-mediated hemorrhage. May also facilitate the antibacterial immune response via both innate and T-cell mediated pathways. The chain is Fibrinogen beta chain (FGB) from Odocoileus hemionus (Mule deer).